We begin with the raw amino-acid sequence, 164 residues long: UPF0114 protein Spro_2386 (164 aa).

3 consecutive transmembrane segments (helical) span residues 15–35 (LLAPVYFGLSLALLALSIKFF), 53–73 (LVLTLLSLIDMALVGGLLVMV), and 136–156 (LMWYVIIHLTFVLSAFVMGYL).

The protein belongs to the UPF0114 family.

It is found in the cell membrane. This chain is UPF0114 protein Spro_2386, found in Serratia proteamaculans (strain 568).